We begin with the raw amino-acid sequence, 705 residues long: Cell cycle serine/threonine-protein kinase CDC5/MSD2 (705 aa).

The residue at position 23 (Thr23) is a Phosphothreonine. The segment covering 41 to 53 (QTKRLDPNNDHHH) has biased composition (basic and acidic residues). Positions 41–63 (QTKRLDPNNDHHHQPAQKKKREK) are disordered. A Protein kinase domain is found at 82-337 (YHRGHFLGEG…LTEIMDYVWF (256 aa)). Residues 88–96 (LGEGGFARC) and Lys110 each bind ATP. Asp204 serves as the catalytic Proton acceptor. Position 419 is a phosphoserine (Ser419). The region spanning 513–595 (IVTKWVDYSN…VDFFAKYMKA (83 aa)) is the POLO box 1 domain. The Zn(2+) site is built by Glu553, His569, His609, and Asp612. In terms of domain architecture, POLO box 2 spans 614–700 (FLRRYTRYKP…IKEGLKQKST (87 aa)).

This sequence belongs to the protein kinase superfamily. Ser/Thr protein kinase family. CDC5/Polo subfamily. In terms of assembly, interacts with CDC48; the interaction is likely to result in CDC5 degradation. Interacts with CSA1.

The protein resides in the cytoplasm. It is found in the cytoskeleton. It localises to the microtubule organizing center. Its subcellular location is the spindle pole body. The enzyme catalyses L-seryl-[protein] + ATP = O-phospho-L-seryl-[protein] + ADP + H(+). It carries out the reaction L-threonyl-[protein] + ATP = O-phospho-L-threonyl-[protein] + ADP + H(+). Protein kinase required for the cell cycle where it is involved in mitotic exit. A component of the fear (CDC14 early anaphase release) network which promotes CDC14 release from the nucleolus during early anaphase. Phosphorylates SCC1/MCD1 and NET1. The chain is Cell cycle serine/threonine-protein kinase CDC5/MSD2 (CDC5) from Saccharomyces cerevisiae (strain ATCC 204508 / S288c) (Baker's yeast).